The sequence spans 178 residues: Endoribonuclease YbeY (178 aa).

Zn(2+)-binding residues include histidine 118, histidine 122, and histidine 128.

Belongs to the endoribonuclease YbeY family. Zn(2+) serves as cofactor.

It is found in the cytoplasm. Single strand-specific metallo-endoribonuclease involved in late-stage 70S ribosome quality control and in maturation of the 3' terminus of the 16S rRNA. The sequence is that of Endoribonuclease YbeY from Mycobacterium leprae (strain Br4923).